Here is a 153-residue protein sequence, read N- to C-terminus: Large ribosomal subunit protein uL15 (153 aa).

The segment at 1-48 (MRLNELSPAPGSKKDRKRVGRGDAGRGNYSGRGMKGQKARSGGATRPG) is disordered.

The protein belongs to the universal ribosomal protein uL15 family. As to quaternary structure, part of the 50S ribosomal subunit.

Its function is as follows. Binds to the 23S rRNA. The protein is Large ribosomal subunit protein uL15 of Dehalococcoides mccartyi (strain ATCC BAA-2266 / KCTC 15142 / 195) (Dehalococcoides ethenogenes (strain 195)).